Consider the following 190-residue polypeptide: MNQQENNFVLADIVRALRQEEVIAYPTEAVFGLGCDPDSEKAVNTLLALKQRPWQKGLILVAANYAQLEPYINDSMLNEIQRETLFSTWPGPITWVIPARVETPQWLTGCFDSLAVRVSNHPLVQQLCAEYGKPLVSTSANLSGHEPCRTEEEVRIQFGPSLPVLSGHVGGRLNPSEIRDALTGKRFRQG.

The region spanning 7 to 190 (NFVLADIVRA…ALTGKRFRQG (184 aa)) is the YrdC-like domain.

The protein belongs to the SUA5 family. TsaC subfamily.

It localises to the cytoplasm. The enzyme catalyses L-threonine + hydrogencarbonate + ATP = L-threonylcarbamoyladenylate + diphosphate + H2O. Its function is as follows. Required for the formation of a threonylcarbamoyl group on adenosine at position 37 (t(6)A37) in tRNAs that read codons beginning with adenine. Catalyzes the conversion of L-threonine, HCO(3)(-)/CO(2) and ATP to give threonylcarbamoyl-AMP (TC-AMP) as the acyladenylate intermediate, with the release of diphosphate. The chain is Threonylcarbamoyl-AMP synthase from Yersinia pestis bv. Antiqua (strain Angola).